The chain runs to 81 residues: Putative membrane protein insertion efficiency factor (81 aa).

A disordered region spans residues 61–81 (NDGGYDPVPPAPSSRTSSIAE).

This sequence belongs to the UPF0161 family.

Its subcellular location is the cell inner membrane. Functionally, could be involved in insertion of integral membrane proteins into the membrane. In Pseudomonas putida (strain ATCC 47054 / DSM 6125 / CFBP 8728 / NCIMB 11950 / KT2440), this protein is Putative membrane protein insertion efficiency factor.